Here is a 439-residue protein sequence, read N- to C-terminus: MTAFPDVPVIQYEGPQSDNPLAFRWYNPDEVIEGKTMKDHMRFSIVYWHTFRGTGADPFGPGTAVRPWDNGSESVENAQKRAVVAFELFTKLQAPYYAWHDRDVAPEGANLRETHANLDAVADVLEEQQKATGVKLLWGTANMFSNPRFMHGAATSCNADVFAYAGAQVKKALEVTKRLGGENYVFWGGREGYQNLYNTDMKRELDHLAKFFHMAVDYAKSIGFDGQFLIEPKPKEPTKHQYDSDAAACMNFLRAYDLDSHFKLNIETNHATLAGHTMMHELDYAGIQGGLGSIDANTGDLLLGWDTDQFPTDYYLTTQTMLMILKHGGIGTGGVNFDAKVRRESFEPIDLFHAHIGGMDAFAKGLKIAAAIRASGELADFVKNRYSTWDSGIGAKIEAGEVGFAELEAYMLEKGDVDANQSGRQEYLEHMINKYIDRV.

Residues H100 and D103 contribute to the active site. 7 residues coordinate Mg(2+): E231, E267, H270, D295, D306, D308, and D338.

This sequence belongs to the xylose isomerase family. Homotetramer. It depends on Mg(2+) as a cofactor.

The protein localises to the cytoplasm. It carries out the reaction alpha-D-xylose = alpha-D-xylulofuranose. This is Xylose isomerase from Rhodopirellula baltica (strain DSM 10527 / NCIMB 13988 / SH1).